We begin with the raw amino-acid sequence, 1434 residues long: Ankyrin and armadillo repeat-containing protein (1434 aa).

The chain crosses the membrane as a helical span at residues 309-329 (IRRGIGYLKLICFLIPFLLSL). ANK repeat units follow at residues 532–561 (AGYT…KVNQ), 569–598 (QGPT…DYTL), 602–631 (RGWM…SLLE), 638–667 (NQCT…NWRK), and 671–701 (KGNN…ELPV). ARM repeat units follow at residues 732–771 (DQYW…NIST), 773–812 (KSAV…DIAQ), 814–852 (ENKD…VLCI), 855–894 (ENNQ…EVGR), 897–936 (KEIQ…SLAS), and 1072–1112 (PVSQ…CIVL).

As to expression, ubiquitously expressed with highest level in pancreas and lowest in skeletal muscle.

The protein resides in the membrane. This chain is Ankyrin and armadillo repeat-containing protein (ANKAR), found in Homo sapiens (Human).